A 349-amino-acid chain; its full sequence is Homeobox protein engrailed (349 aa).

Disordered stretches follow at residues 26 to 53 (DGPS…SPLS), 146 to 210 (GKET…PLPP), 228 to 252 (PSSG…EKRP), and 327 to 349 (STIP…ARIE). Composition is skewed to basic and acidic residues over residues 173 to 188 (QMKK…RTES) and 242 to 252 (DKAITPDEKRP). Residues 249 to 308 (EKRPRTAFTAEQLSRLKHEFNENRYLTERRRQDLARELGLHENQIKIWFQNNRAKLKKSS) constitute a DNA-binding region (homeobox).

Belongs to the engrailed homeobox family.

The protein resides in the nucleus. The protein is Homeobox protein engrailed of Artemia franciscana (Brine shrimp).